Reading from the N-terminus, the 461-residue chain is MGKEDKTHINVVVIGHVDSGKSTTTGHLIYKCGGIDKRTIEKFEKEAAELGKGSFKYAWVLDKLKAERERGITIDIALWKFETPKYYVTVIDAPGHRDFIKNMITGTSQADCAILIIAAGTGEFEAGISKDGQTREHALLAYTLGVKQLIVAINKMDTTKWSEARFNEIIKETSNFIKKVGYNPKTVAFVPISGFNGDNMLEASTNCPWYKGWEKEVKGGKATGKTLLEAIDSIEPPKRPTDKPLRLPLQDVYKIGGIGTVPVGRIETGILKPGMVVTFAPSNVTTEVKSVEMHHEQLSEGVPGDNVGFNVKNVSVKEIRRGNVAGDSKNDPPLGAASFDAQVIVLNHPGQVGAGYAPVLDCHTAHIACKFAELLQKIDRRTGKAVEESPKFIKSGDAAIVKMIPSKPMCVEAFTEYPPLGRFAVRDMRQTVAVGVIKKVEKAAAGSGKVTKSAAKAGGKK.

Position 2 is a n,N,N-trimethylglycine (glycine 2). N6,N6-dimethyllysine; alternate is present on lysine 3. Lysine 3 is subject to N6-methyllysine; alternate. One can recognise a tr-type G domain in the interval 6-241; sequence KTHINVVVIG…DSIEPPKRPT (236 aa). Positions 15–22 are G1; that stretch reads GHVDSGKS. A GTP-binding site is contributed by 15–22; it reads GHVDSGKS. Lysine 31 bears the N6-methyllysine mark. The tract at residues 71-75 is G2; it reads GITID. An N6,N6,N6-trimethyllysine modification is found at lysine 80. Residues 92 to 95 are G3; sequence DAPG. GTP contacts are provided by residues 92–96 and 154–157; these read DAPGH and NKMD. The segment at 154–157 is G4; it reads NKMD. The G5 stretch occupies residues 193 to 195; it reads SGF. Lysine 317 carries the post-translational modification N6,N6-dimethyllysine; alternate. The residue at position 317 (lysine 317) is an N6-methyllysine; alternate. Lysine 391 is subject to N6-methyllysine.

This sequence belongs to the TRAFAC class translation factor GTPase superfamily. Classic translation factor GTPase family. EF-Tu/EF-1A subfamily.

Its subcellular location is the cytoplasm. In terms of biological role, this protein promotes the GTP-dependent binding of aminoacyl-tRNA to the A-site of ribosomes during protein biosynthesis. In Pseudoechria curvicolla (Podospora curvicolla), this protein is Elongation factor 1-alpha (TEF).